The following is a 553-amino-acid chain: Coiled-coil domain-containing protein 22 homolog (553 aa).

Coiled-coil stretches lie at residues Leu-261–Gln-404 and Asn-498–Ala-553.

This sequence belongs to the CCDC22 family.

This chain is Coiled-coil domain-containing protein 22 homolog, found in Drosophila pseudoobscura pseudoobscura (Fruit fly).